Here is a 194-residue protein sequence, read N- to C-terminus: Imidazoleglycerol-phosphate dehydratase (194 aa).

Belongs to the imidazoleglycerol-phosphate dehydratase family.

Its subcellular location is the cytoplasm. The enzyme catalyses D-erythro-1-(imidazol-4-yl)glycerol 3-phosphate = 3-(imidazol-4-yl)-2-oxopropyl phosphate + H2O. It functions in the pathway amino-acid biosynthesis; L-histidine biosynthesis; L-histidine from 5-phospho-alpha-D-ribose 1-diphosphate: step 6/9. The sequence is that of Imidazoleglycerol-phosphate dehydratase from Bacillus pumilus (strain SAFR-032).